The primary structure comprises 583 residues: ATP-dependent lipid A-core flippase (583 aa).

The next 5 membrane-spanning stretches (helical) occupy residues 27–47, 69–89, 142–162, 165–185, and 249–269; these read LAVAVVALIINAVSDTYMVSL, LLVFGLMFIRGISSFVSTYCL, ALVSIVREGTSIIGLLVLMFY, WQLSLVLILVAPVVAWAIGFV, and AAANPIIQMIASIAIVVVLYL. The ABC transmembrane type-1 domain occupies 28 to 310; that stretch reads AVAVVALIIN…LTNVTSQFQR (283 aa). In terms of domain architecture, ABC transporter spans 342–578; the sequence is VNVKDISFTY…DGAYAQLHRI (237 aa). 376–383 lines the ATP pocket; the sequence is GRSGSGKS.

It belongs to the ABC transporter superfamily. Lipid exporter (TC 3.A.1.106) family. As to quaternary structure, homodimer.

Its subcellular location is the cell inner membrane. It catalyses the reaction ATP + H2O + lipid A-core oligosaccharideSide 1 = ADP + phosphate + lipid A-core oligosaccharideSide 2.. Functionally, involved in lipopolysaccharide (LPS) biosynthesis. Translocates lipid A-core from the inner to the outer leaflet of the inner membrane. Transmembrane domains (TMD) form a pore in the inner membrane and the ATP-binding domain (NBD) is responsible for energy generation. The sequence is that of ATP-dependent lipid A-core flippase from Vibrio vulnificus (strain CMCP6).